A 448-amino-acid polypeptide reads, in one-letter code: tRNA wybutosine-synthesizing protein 2 homolog (448 aa).

S-adenosyl-L-methionine is bound by residues S218, K225, E265, and 293–294 (DN).

The protein belongs to the class I-like SAM-binding methyltransferase superfamily. TRM5/TYW2 family.

It catalyses the reaction 4-demethylwyosine(37) in tRNA(Phe) + S-adenosyl-L-methionine = 4-demethyl-7-[(3S)-3-amino-3-carboxypropyl]wyosine(37) in tRNA(Phe) + S-methyl-5'-thioadenosine + H(+). The protein operates within tRNA modification; wybutosine-tRNA(Phe) biosynthesis. In terms of biological role, S-adenosyl-L-methionine-dependent transferase that acts as a component of the wybutosine biosynthesis pathway. Wybutosine is a hyper modified guanosine with a tricyclic base found at the 3'-position adjacent to the anticodon of eukaryotic phenylalanine tRNA. Catalyzes the transfer of the alpha-amino-alpha-carboxypropyl (acp) group from S-adenosyl-L-methionine to the C-7 position of 4-demethylwyosine (imG-14) to produce wybutosine-86. In Macaca fascicularis (Crab-eating macaque), this protein is tRNA wybutosine-synthesizing protein 2 homolog (TRMT12).